Reading from the N-terminus, the 295-residue chain is Bifunctional protein FolD (295 aa).

Residues 165-167 (GRS), Ser-190, and Ile-231 each bind NADP(+).

It belongs to the tetrahydrofolate dehydrogenase/cyclohydrolase family. As to quaternary structure, homodimer.

The enzyme catalyses (6R)-5,10-methylene-5,6,7,8-tetrahydrofolate + NADP(+) = (6R)-5,10-methenyltetrahydrofolate + NADPH. It carries out the reaction (6R)-5,10-methenyltetrahydrofolate + H2O = (6R)-10-formyltetrahydrofolate + H(+). The protein operates within one-carbon metabolism; tetrahydrofolate interconversion. In terms of biological role, catalyzes the oxidation of 5,10-methylenetetrahydrofolate to 5,10-methenyltetrahydrofolate and then the hydrolysis of 5,10-methenyltetrahydrofolate to 10-formyltetrahydrofolate. The chain is Bifunctional protein FolD from Nitrosomonas europaea (strain ATCC 19718 / CIP 103999 / KCTC 2705 / NBRC 14298).